The primary structure comprises 79 residues: MPKRILQGVVVGDKNEKTVVVRVERRFAHPLLQKTVRRSKKYKAHDENNEYKIGDTVSIEECAPISKDKRWTVIAAQGK.

The protein belongs to the universal ribosomal protein uS17 family. Part of the 30S ribosomal subunit.

In terms of biological role, one of the primary rRNA binding proteins, it binds specifically to the 5'-end of 16S ribosomal RNA. In Rhizobium etli (strain ATCC 51251 / DSM 11541 / JCM 21823 / NBRC 15573 / CFN 42), this protein is Small ribosomal subunit protein uS17.